The chain runs to 324 residues: NADH-ubiquinone oxidoreductase chain 1 (324 aa).

A run of 8 helical transmembrane segments spans residues 10 to 30, 76 to 96, 107 to 127, 143 to 163, 178 to 198, 229 to 249, 260 to 280, and 300 to 320; these read MIMT…LTLV, FLFI…WTPL, LGLL…LWSG, VAQT…TIML, PMYL…STLA, LFFL…ITLF, ELFS…FLWI, and FLPL…SYAG.

Belongs to the complex I subunit 1 family.

It localises to the mitochondrion inner membrane. The catalysed reaction is a ubiquinone + NADH + 5 H(+)(in) = a ubiquinol + NAD(+) + 4 H(+)(out). Functionally, core subunit of the mitochondrial membrane respiratory chain NADH dehydrogenase (Complex I) that is believed to belong to the minimal assembly required for catalysis. Complex I functions in the transfer of electrons from NADH to the respiratory chain. The immediate electron acceptor for the enzyme is believed to be ubiquinone. In Coturnix japonica (Japanese quail), this protein is NADH-ubiquinone oxidoreductase chain 1 (MT-ND1).